The primary structure comprises 201 residues: Pyrrolidone-carboxylate peptidase (201 aa).

Catalysis depends on residues E81, C143, and H168.

This sequence belongs to the peptidase C15 family. In terms of assembly, homotetramer.

It is found in the cytoplasm. The enzyme catalyses Release of an N-terminal pyroglutamyl group from a polypeptide, the second amino acid generally not being Pro.. In terms of biological role, removes 5-oxoproline from various penultimate amino acid residues except L-proline. The chain is Pyrrolidone-carboxylate peptidase (pcp) from Halalkalibacterium halodurans (strain ATCC BAA-125 / DSM 18197 / FERM 7344 / JCM 9153 / C-125) (Bacillus halodurans).